The sequence spans 194 residues: uncharacterized protein (194 aa).

A signal peptide spans 1-15 (MFVLSIALLSCTTLC). One can recognise a PAN domain in the interval 49-134 (CPQGLHADAI…KATYYEKIRC (86 aa)). Disulfide bonds link Cys-49-Cys-134 and Cys-79-Cys-106.

This is an uncharacterized protein from Caenorhabditis elegans.